Here is a 205-residue protein sequence, read N- to C-terminus: GTP cyclohydrolase-2 (205 aa).

49-53 (RLHSE) provides a ligand contact to GTP. The Zn(2+) site is built by C54, C65, and C67. GTP contacts are provided by residues Q70, 92 to 94 (EGR), and T114. The active-site Proton acceptor is the D126. The Nucleophile role is filled by R128. The GTP site is built by T149 and K154.

The protein belongs to the GTP cyclohydrolase II family. The cofactor is Zn(2+).

The catalysed reaction is GTP + 4 H2O = 2,5-diamino-6-hydroxy-4-(5-phosphoribosylamino)-pyrimidine + formate + 2 phosphate + 3 H(+). Its pathway is cofactor biosynthesis; riboflavin biosynthesis; 5-amino-6-(D-ribitylamino)uracil from GTP: step 1/4. In terms of biological role, catalyzes the conversion of GTP to 2,5-diamino-6-ribosylamino-4(3H)-pyrimidinone 5'-phosphate (DARP), formate and pyrophosphate. The polypeptide is GTP cyclohydrolase-2 (Pseudomonas putida (strain W619)).